Consider the following 362-residue polypeptide: Heat-inducible transcription repressor HrcA (362 aa).

The protein belongs to the HrcA family.

In terms of biological role, negative regulator of class I heat shock genes (grpE-dnaK-dnaJ and groELS operons). Prevents heat-shock induction of these operons. This is Heat-inducible transcription repressor HrcA from Rhizobium etli (strain CIAT 652).